A 142-amino-acid polypeptide reads, in one-letter code: MAKKVQALIKLQVAAGAANPSPPVGPALGQHGVNIMEFCKAFNAKTDSLEKGAPVPVVITVYSDRSFTFETKTPPASFLLKKAAGIKSGSGRPNTDKVGTVTTAQLEEIVKTKEPDLTAGSLEAAVRTIAGSARSMGLVVED.

The protein belongs to the universal ribosomal protein uL11 family. As to quaternary structure, part of the ribosomal stalk of the 50S ribosomal subunit. Interacts with L10 and the large rRNA to form the base of the stalk. L10 forms an elongated spine to which L12 dimers bind in a sequential fashion forming a multimeric L10(L12)X complex. In terms of processing, one or more lysine residues are methylated.

Its function is as follows. Forms part of the ribosomal stalk which helps the ribosome interact with GTP-bound translation factors. The polypeptide is Large ribosomal subunit protein uL11 (Colwellia psychrerythraea (strain 34H / ATCC BAA-681) (Vibrio psychroerythus)).